Here is a 495-residue protein sequence, read N- to C-terminus: MLQVLAPFYSNLSGLILLPLLGSLIILVIPNSRVRLIRGITIWTSLITFLYSLFFWIRFENDTAKFQFVETIRWLPYSNINFYIGIDGISLFFVILTTFLTPICILVGFYSVKSYKKEYMIAFFICESFLIAVFCSLDLLIFYVFFESVLIPMFIIIGVWGSRQRKIKAAYQFFLYTLMGSLFMLLAILFIFFQTGTTDLQILLTTEFSERRQILLWIAFFASFSVKVPMVPVHIWLPEAHVEAPTAGSVILAGILLKLGTYGFLRFSIPMFPEATLYFTPFIYTLSVIAIIYTSLTTIRQIDLKKIIAYSSVAHMNFVTIGMFSLNIQGIEGSILLMLSHGLVSSALFLCVGALYDRHKTRIVKYYGGLVSTMPIFSTIFLFFTLANMSLPGTSSFIGEFLILVGAFQRNSLVATLAALGMILGAAYSLWLYNRVVFGNFKPNFILKFSDLNRREVLIFLPFIVGVIWMGVYPEVFLECMHTSVSNLVQHGKFD.

14 helical membrane passes run 9 to 29, 37 to 57, 89 to 109, 118 to 138, 139 to 159, 173 to 193, 214 to 234, 245 to 265, 272 to 292, 307 to 327, 335 to 355, 367 to 387, 413 to 433, and 457 to 477; these read YSNL…ILVI, IRGI…FFWI, ISLF…LVGF, EYMI…CSLD, LLIF…IIGV, FFLY…FIFF, ILLW…VPVH, PTAG…YGFL, FPEA…IAII, IIAY…FSLN, ILLM…VGAL, YGGL…FTLA, LVAT…LWLY, and VLIF…PEVF.

This sequence belongs to the complex I subunit 4 family.

It localises to the mitochondrion membrane. The enzyme catalyses a ubiquinone + NADH + 5 H(+)(in) = a ubiquinol + NAD(+) + 4 H(+)(out). Core subunit of the mitochondrial membrane respiratory chain NADH dehydrogenase (Complex I) that is believed to belong to the minimal assembly required for catalysis. Complex I functions in the transfer of electrons from NADH to the respiratory chain. The immediate electron acceptor for the enzyme is believed to be ubiquinone. This Marchantia polymorpha (Common liverwort) protein is NADH-ubiquinone oxidoreductase chain 4 (ND4).